Reading from the N-terminus, the 243-residue chain is MYYQNVSVGQLIKRVSRFTVEIDLNGTVEPVHMNNTGRNKEILIPGSLASVRYVDNPNRKTHYDLLAVQRQGRWINIDSLAPNHVAKECLEAGTLKLPGLALPYAVHPESTWRDSRLDFAGKAADGQSWFVETKGVTLANGTLAAFPDAPTTRAVKHVHTLTMAQAEGYQAFLLFIVQLPDIRQMTIYRDRFPELVTAITTAKQNGVRVLAYDTMTGPDQITLGNEIPFDEHLPFSEINLNSL.

This sequence belongs to the SfsA family.

In Lacticaseibacillus casei (strain BL23) (Lactobacillus casei), this protein is Sugar fermentation stimulation protein homolog.